Here is a 348-residue protein sequence, read N- to C-terminus: Alcohol dehydrogenase 1 (348 aa).

N-acetylserine is present on S2. Position 44 (C44) interacts with Zn(2+). Residues H45, T46, and H49 each coordinate NAD(+). Zn(2+) contacts are provided by H67, E68, C98, C101, C104, C112, and C154. Positions 181, 182, 183, 202, and 207 each coordinate NAD(+). At S213 the chain carries Phosphoserine. F222 contributes to the NAD(+) binding site. T223 carries the post-translational modification Phosphothreonine. Glycyl lysine isopeptide (Lys-Gly) (interchain with G-Cter in ubiquitin) cross-links involve residues K226 and K234. Residues V269 and M271 each contribute to the NAD(+) site. Phosphoserine is present on S279. Residue K287 forms a Glycyl lysine isopeptide (Lys-Gly) (interchain with G-Cter in ubiquitin) linkage. NAD(+)-binding residues include S294 and V296. S316 carries the phosphoserine modification. K319 is covalently cross-linked (Glycyl lysine isopeptide (Lys-Gly) (interchain with G-Cter in ubiquitin)). NAD(+) is bound at residue R341.

It belongs to the zinc-containing alcohol dehydrogenase family. Homotetramer. Zn(2+) serves as cofactor.

The protein localises to the cytoplasm. It carries out the reaction a primary alcohol + NAD(+) = an aldehyde + NADH + H(+). The catalysed reaction is a secondary alcohol + NAD(+) = a ketone + NADH + H(+). It catalyses the reaction ethanol + NAD(+) = acetaldehyde + NADH + H(+). The enzyme catalyses allyl alcohol + NADP(+) = acrolein + NADPH + H(+). It carries out the reaction 1-propanol + NAD(+) = propanal + NADH + H(+). The catalysed reaction is butan-1-ol + NAD(+) = butanal + NADH + H(+). It catalyses the reaction hexan-1-ol + NAD(+) = hexanal + NADH + H(+). The enzyme catalyses (R)-lactaldehyde + NAD(+) = methylglyoxal + NADH + H(+). It carries out the reaction octan-1-ol + NAD(+) = octanal + NADH + H(+). The catalysed reaction is butan-2-ol + NAD(+) = butan-2-one + NADH + H(+). It catalyses the reaction propan-2-ol + NAD(+) = acetone + NADH + H(+). The enzyme catalyses isobutanol + NAD(+) = 2-methylpropanal + NADH + H(+). Functionally, preferentially fermentative isozyme that reduces acetaldehyde to ethanol during the fermentation of glucose. Major enzyme required for the conversion of acetaldehyde to ethanol. Plays a key role in the carbohydrate metabolism through the regeneration of NAD(+) from glycolytic NADH. In the reverse reaction, preferentially catalyzes the conversion of primary unbranched alcohols to their corresponding aldehydes. Also shows activity toward secondary alcohols. Most active with ethanol, and its activity decreases as the size of the alcohol is increased. The chain is Alcohol dehydrogenase 1 (ADH1) from Saccharomyces cerevisiae (strain ATCC 204508 / S288c) (Baker's yeast).